Consider the following 513-residue polypeptide: Probable lipid II flippase MurJ (513 aa).

15 helical membrane-spanning segments follow: residues 3 to 23 (ILKSLISLSLITFISRILGFM), 25 to 45 (DLLIAYSFGASGITDAFFLAF), 83 to 103 (FISNILGLMIIILSLFTAFGI), 133 to 153 (IMFPYIFFVSLGSLTGSILNA), 162 to 182 (YSSIFLNLSMIMFISFVTAYF), 186 to 206 (ILSLAWAVIVGGVFQILYQFP), 221 to 241 (ILNLGVLKFLKQIGIVALGMS), 245 to 265 (VSIIIATISSSFLISGSISWI), 271 to 291 (LVEFISGIFGVSLSTILLPLL), 313 to 333 (LVCILVIPSIIILFTLSESLI), 354 to 374 (IEFYSIGLLPFVLIKILLAGF), 382 to 402 (TPMKISIFILVLTQLMNIFFI), 405 to 425 (FQYTSFALAISLASWINFFLL), 441 to 461 (WLRFLLKIFAAAMVMLILLFI), and 481 to 501 (LFYICASSGGGYLFTLFCLGL).

This sequence belongs to the MurJ/MviN family.

The protein localises to the cell inner membrane. Its pathway is cell wall biogenesis; peptidoglycan biosynthesis. Functionally, involved in peptidoglycan biosynthesis. Transports lipid-linked peptidoglycan precursors from the inner to the outer leaflet of the cytoplasmic membrane. The polypeptide is Probable lipid II flippase MurJ (Buchnera aphidicola subsp. Baizongia pistaciae (strain Bp)).